Here is a 142-residue protein sequence, read N- to C-terminus: NTF2-related export protein 2 (142 aa).

One can recognise an NTF2 domain in the interval Ala-17–Phe-136.

In terms of assembly, associates with NXF1, NXF2, NXF3 and NXF5.

Its subcellular location is the nucleus. The protein resides in the cytoplasm. Regulator of protein export for NES-containing proteins. Also plays a role in mRNA nuclear export. The protein is NTF2-related export protein 2 of Homo sapiens (Human).